Consider the following 1186-residue polypeptide: MDEPPGKPLSCEEKEKLKEKLAFLKREYSKTLARLQRAQRAEKIKHSIKKTVEEQDCLSQQDLSPQLKHSEPKNKICVYDKLHIKTHLDEETGEKTSITLDVGPESFNPGDGPGGLPIQRTDDTQEHFPHRVSDPSGEQKQKLPSRRKKQQKRTFISQERDCVFGTDSLRLSGKRLKEQEEISSKNPARSPVTEIRTHLLSLKSELPDSPEPVTEINEDSVLIPPTAQPEKGVDTFLRRPNFTRATTVPLQTLSDSGSSQHLEHIPPKGSSELTTHDLKNIRFTSPVSLEAQGKKMTVSTDNLLVNKAISKSGQLPTSSNLEANISCSLNELTYNNLPANENQNLKEQNQTEKSLKSPSDTLDGRNENLQESEILSQPKSLSLEATSPLSAEKHSCTVPEGLLFPAEYYVRTTRSMSNCQRKVAVEAVIQSHLDVKKKGFKNKNKDASKNLNLSNEETDQSEIRMSGTCTGQPSSRTSQKLLSLTKVSSPAGPTEDNDLSRKAVAQAPGRRYTGKRKSACTPASDHCEPLLPTSSLSIVNRSKEEVTSHKYQHEKLFIQVKGKKSRHQKEDSLSWSNSAYLSLDDDAFTAPFHRDGMLSLKQLLSFLSITDFQLPDEDFGPLKLEKVKSCSEKPVEPFESKMFGERHLKEGSCIFPEELSPKRMDTEMEDLEEDLIVLPGKSHPKRPNSQSQHTKTGLSSSILLYTPLNTVAPDDNDRPTTDMCSPAFPILGTTPAFGPQGSYEKASTEVAGRTCCTPQLAHLKDSVCLASDTKQFDSSGSPAKPHTTLQVSGRQGQPTCDCDSVPPGTPPPIESFTFKENQLCRNTCQELHKHSVEQTETAELPASDSINPGNLQLVSELKNPSGSCSVDVSAMFWERAGCKEPCIITACEDVVSLWKALDAWQWEKLYTWHFAEVPVLQIVPVPDVYNLVCVALGNLEIREIRALFCSSDDESEKQVLLKSGNIKAVLGLTKRRLVSSSGTLSDQQVEVMTFAEDGGGKENQFLMPPEETILTFAEVQGMQEALLGTTIMNNIVIWNLKTGQLLKKMHIDDSYQASVCHKAYSEMGLLFIVLSHPCAKESESLRSPVFQLIVINPKTTLSVGVMLYCLPPGQAGRFLEGDVKDHCAAAILTSGTIAIWDLLLGQCTALLPPVSDQHWSFVKWSGTDSHLLAGQKDGNIFVYHYS.

Residues 1-160 (MDEPPGKPLS…QKRTFISQER (160 aa)) are required for its oligomerization and is important for its focal concentration at DNA damage sites. The segment at 1–200 (MDEPPGKPLS…PVTEIRTHLL (200 aa)) is interaction with RAD51. The tract at residues 1 to 319 (MDEPPGKPLS…SKSGQLPTSS (319 aa)) is interaction with BRCA1. The tract at residues 1–579 (MDEPPGKPLS…EDSLSWSNSA (579 aa)) is DNA-binding (with the preference D loop &gt; dsDNA &gt; ssDNA). The stretch at 9 to 41 (LSCEEKEKLKEKLAFLKREYSKTLARLQRAQRA) forms a coiled coil. Disordered regions lie at residues 52-72 (VEEQ…HSEP) and 95-157 (KTSI…TFIS). Residues 120–141 (RTDDTQEHFPHRVSDPSGEQKQ) show a composition bias toward basic and acidic residues. The span at 143–152 (LPSRRKKQQK) shows a compositional bias: basic residues. A phosphoserine mark is found at Ser172 and Ser190. The tract at residues 252-273 (TLSDSGSSQHLEHIPPKGSSEL) is disordered. Ser285 carries the post-translational modification Phosphoserine. A disordered region spans residues 346-365 (KEQNQTEKSLKSPSDTLDGR). Phosphoserine occurs at positions 376 and 387. Residues 395 to 446 (SCTVPEGLLFPAEYYVRTTRSMSNCQRKVAVEAVIQSHLDVKKKGFKNKNKD) form a chAM (Chromatin-association motif); required for chromatin association, mediates nucleosome association region. Residues 440–525 (FKNKNKDASK…RKSACTPASD (86 aa)) form a disordered region. Residue Ser454 is modified to Phosphoserine. Residues 467 to 488 (GTCTGQPSSRTSQKLLSLTKVS) show a composition bias toward polar residues. Ser660 carries the post-translational modification Phosphoserine. Disordered regions lie at residues 679–698 (PGKS…KTGL) and 774–798 (KQFD…QGQP). Residues 687-698 (PNSQSQHTKTGL) show a composition bias toward polar residues. Residues 775-1186 (QFDSSGSPAK…DGNIFVYHYS (412 aa)) are required for interaction with POLH and POLH DNA synthesis stimulation. Position 781 is a phosphoserine (Ser781). Residues 853 to 1186 (GNLQLVSELK…DGNIFVYHYS (334 aa)) are interaction with RAD51, BRCA2 and POLH. WD repeat units follow at residues 854-915 (NLQL…WHFA), 917-961 (VPVL…QVLL), 962-1009 (KSGN…LMPP), 1010-1052 (EETI…MHID), 1058-1109 (SVCH…MLYC), 1115-1153 (AGRF…LLPP), and 1155-1186 (SDQH…YHYS).

As to quaternary structure, homooligomer; dissociated upon DNA damage thus allowing association with BRCA1. Oligomerization is essential for its focal accumulation at DNA breaks. Part of a BRCA complex containing BRCA1, BRCA2 and PALB2. Interacts with BRCA1 and this interaction is essential for its function in HRR. Interacts with RAD51AP1 and MORF4L1/MRG15. Component of the homologous recombination repair (HR) complex composed of ERCC5/XPG, BRCA2, PALB2, DSS1 and RAD51. Within the complex, interacts with ERCC5/XPG and BRCA2. Interacts with BRCA2, RAD51C, RAD51 and XRCC3; the interactions are direct and it may serve as a scaffold for a HR complex containing PALB2, BRCA2, RAD51C, RAD51 and XRCC3. Interacts with POLH; the interaction is direct.

The protein resides in the nucleus. Its function is as follows. Plays a critical role in homologous recombination repair (HRR) through its ability to recruit BRCA2 and RAD51 to DNA breaks. Strongly stimulates the DNA strand-invasion activity of RAD51, stabilizes the nucleoprotein filament against a disruptive BRC3-BRC4 polypeptide and helps RAD51 to overcome the suppressive effect of replication protein A (RPA). Functionally cooperates with RAD51AP1 in promoting of D-loop formation by RAD51. Serves as the molecular scaffold in the formation of the BRCA1-PALB2-BRCA2 complex which is essential for homologous recombination. Via its WD repeats is proposed to scaffold a HR complex containing RAD51C and BRCA2 which is thought to play a role in HR-mediated DNA repair. Essential partner of BRCA2 that promotes the localization and stability of BRCA2. Also enables its recombinational repair and checkpoint functions of BRCA2. May act by promoting stable association of BRCA2 with nuclear structures, allowing BRCA2 to escape the effects of proteasome-mediated degradation. Binds DNA with high affinity for D loop, which comprises single-stranded, double-stranded and branched DNA structures. May play a role in the extension step after strand invasion at replication-dependent DNA double-strand breaks; together with BRCA2 is involved in both POLH localization at collapsed replication forks and DNA polymerization activity. The sequence is that of Partner and localizer of BRCA2 (PALB2) from Homo sapiens (Human).